The following is a 309-amino-acid chain: Type II methyltransferase M.HindIII (309 aa).

Belongs to the N(4)/N(6)-methyltransferase family.

The enzyme catalyses a 2'-deoxyadenosine in DNA + S-adenosyl-L-methionine = an N(6)-methyl-2'-deoxyadenosine in DNA + S-adenosyl-L-homocysteine + H(+). A beta subtype methylase that recognizes the double-stranded sequence 5'-AAGCTT-3', methylates A-1 on both strands, and protects the DNA from cleavage by the HindIII endonuclease. This chain is Type II methyltransferase M.HindIII, found in Haemophilus influenzae (strain ATCC 51907 / DSM 11121 / KW20 / Rd).